The following is a 69-amino-acid chain: Small, acid-soluble spore protein C4 (69 aa).

This sequence belongs to the alpha/beta-type SASP family.

Functionally, SASP are bound to spore DNA. They are double-stranded DNA-binding proteins that cause DNA to change to an a-like conformation. They protect the DNA backbone from chemical and enzymatic cleavage and are thus involved in dormant spore's high resistance to UV light. The chain is Small, acid-soluble spore protein C4 (SASP-C4) from Priestia megaterium (Bacillus megaterium).